The chain runs to 273 residues: Beta-lactamase OXA-133 (273 aa).

An N-terminal signal peptide occupies residues 1–17 (MNKYFTCYVVASLFFSG). The N-palmitoyl cysteine moiety is linked to residue Cys18. Cys18 carries the S-diacylglycerol cysteine lipid modification. The active-site Acyl-ester intermediate is Ser79. N6-carboxylysine is present on Lys82. 216–218 (KTG) contacts substrate.

Belongs to the class-D beta-lactamase family.

It localises to the cell membrane. The enzyme catalyses a beta-lactam + H2O = a substituted beta-amino acid. In terms of biological role, catalyzes the hydrolysis of beta-lactam antibiotics. In Acinetobacter radioresistens, this protein is Beta-lactamase OXA-133.